A 79-amino-acid polypeptide reads, in one-letter code: Acyl carrier protein (79 aa).

The 76-residue stretch at 2-77 folds into the Carrier domain; that stretch reads SDVAERVKKI…DAVNFLEKAT (76 aa). Position 37 is an O-(pantetheine 4'-phosphoryl)serine (S37).

Belongs to the acyl carrier protein (ACP) family. Post-translationally, 4'-phosphopantetheine is transferred from CoA to a specific serine of apo-ACP by AcpS. This modification is essential for activity because fatty acids are bound in thioester linkage to the sulfhydryl of the prosthetic group.

The protein resides in the cytoplasm. It functions in the pathway lipid metabolism; fatty acid biosynthesis. In terms of biological role, carrier of the growing fatty acid chain in fatty acid biosynthesis. The chain is Acyl carrier protein from Methylocella silvestris (strain DSM 15510 / CIP 108128 / LMG 27833 / NCIMB 13906 / BL2).